Here is a 303-residue protein sequence, read N- to C-terminus: Target of rapamycin complex subunit LST8 (303 aa).

WD repeat units follow at residues 1–27 (MSVI…CSRT), 30–68 (HSDS…PNPV), 73–112 (GHRG…IPRN), 114–153 (KHNA…CTHQ), 157–196 (EDDT…DASH), 205–244 (AHST…KLET), and 248–287 (GHQR…IVRQ).

It belongs to the WD repeat LST8 family. As to quaternary structure, the target of rapamycin complex 1 (TORC1) is composed of at least KOG1, LST8, TCO89 and either TOR1 (TORC1-A) or TOR2 (TORC1-B). TORC1 binds to and is inhibited by FKBP-rapamycin. Interacts with PIB2; following activation of PIB2 by glutamine or cysteine and as part of the TORC1 complex. The target of rapamycin complex 2 (TORC2) is composed of at least AVO1, AVO2, BIT61, LST8, TOR2 and TSC11. TORC2 forms a homodimer. Contrary to TORC1, TORC2 does not bind to and is not sensitive to FKBP-rapamycin. LST8 binds to the C-terminal kinase domain in TOR2.

The protein localises to the cell membrane. Its subcellular location is the vacuole membrane. Essential component of both TORC1 and TORC2. TORC1 regulates multiple cellular processes to control cell growth in response to environmental signals. Nutrient limitation and environmental stress signals cause inactivation of TORC1. Active TORC1 positively controls ribosome biogenesis via control of rRNA, ribosomal protein and tRNA gene expression, and rRNA processing. TORC1 positively controls protein biosynthesis by regulation of mRNA stability, translation initiation factor activity, and high-affinity amino acid permeases that serve to provide amino acids for use by the translation machinery. TORC1 also promotes growth by sequestering a number of nutrient and general stress-responsive transcription factors in the cytoplasm. TORC1 negatively controls macroautophagy, a process to recycle surplus cytoplasmic mass under nutrient starvation conditions. LST8 is involved in the negative regulation of transcription factors GLN3 and RTG1-RTG3, limiting the synthesis of alpha-ketoglutarate, glutamate and glutamine. LST8 is required for targeting of amino acid permeases (AAPs) to the plasma membrane. TORC2 regulates cell cycle-dependent polarization of the actin-cytoskeleton, cell wall integrity, and receptor endocytosis. TORC2 controls polarity of the actin cytoskeleton, which is required for orienting the secretory pathway toward discrete growth sites, via the RHO1/PKC1/MAPK cell integrity pathway. LST8 is involved in maintenance of cell wall integrity. LST8 modulates TOR2 kinase activity. The protein is Target of rapamycin complex subunit LST8 of Saccharomyces cerevisiae (strain ATCC 204508 / S288c) (Baker's yeast).